The primary structure comprises 110 residues: Insulin-2 (110 aa).

Positions 1 to 24 (MALWIRFLPLLALLILWEPRPAQA) are cleaved as a signal peptide. Cystine bridges form between Cys31-Cys96, Cys43-Cys109, and Cys95-Cys100. Positions 57–87 (EVEDPQVAQLELGGGPGAGDLQTLALEVARQ) are cleaved as a propeptide — c peptide.

Belongs to the insulin family. As to quaternary structure, heterodimer of a B chain and an A chain linked by two disulfide bonds.

The protein localises to the secreted. Its function is as follows. Insulin decreases blood glucose concentration. It increases cell permeability to monosaccharides, amino acids and fatty acids. It accelerates glycolysis, the pentose phosphate cycle, and glycogen synthesis in liver. The sequence is that of Insulin-2 (Ins2) from Rattus norvegicus (Rat).